The following is a 293-amino-acid chain: Formamidopyrimidine-DNA glycosylase (293 aa).

Residue Pro-2 is the Schiff-base intermediate with DNA of the active site. Glu-3 serves as the catalytic Proton donor. The Proton donor; for beta-elimination activity role is filled by Lys-58. DNA-binding residues include His-104, Arg-123, and Lys-166. The segment at 257–293 adopts an FPG-type zinc-finger fold; the sequence is QVYDREGEPCRTDGCEGVVKRFVQNGRSTFWCPKCQR. Arg-283 serves as the catalytic Proton donor; for delta-elimination activity.

This sequence belongs to the FPG family. Monomer. It depends on Zn(2+) as a cofactor.

It catalyses the reaction Hydrolysis of DNA containing ring-opened 7-methylguanine residues, releasing 2,6-diamino-4-hydroxy-5-(N-methyl)formamidopyrimidine.. The enzyme catalyses 2'-deoxyribonucleotide-(2'-deoxyribose 5'-phosphate)-2'-deoxyribonucleotide-DNA = a 3'-end 2'-deoxyribonucleotide-(2,3-dehydro-2,3-deoxyribose 5'-phosphate)-DNA + a 5'-end 5'-phospho-2'-deoxyribonucleoside-DNA + H(+). Functionally, involved in base excision repair of DNA damaged by oxidation or by mutagenic agents. Acts as a DNA glycosylase that recognizes and removes damaged bases. Has a preference for oxidized purines, such as 7,8-dihydro-8-oxoguanine (8-oxoG). Has AP (apurinic/apyrimidinic) lyase activity and introduces nicks in the DNA strand. Cleaves the DNA backbone by beta-delta elimination to generate a single-strand break at the site of the removed base with both 3'- and 5'-phosphates. The protein is Formamidopyrimidine-DNA glycosylase of Bradyrhizobium sp. (strain ORS 278).